Reading from the N-terminus, the 37-residue chain is Hemextin B (37 aa).

As to quaternary structure, heterotetramer composed of 2 hemextin A and 2 hemextin B chains; non-covalently linked. Does not exist as a complex in the crude venom. May contain several disulfide bonds. In terms of tissue distribution, expressed by the venom gland.

The protein localises to the secreted. Functionally, hemextin B (monomer): does not show anticoagulant activity. Seems only to synergitically enhance hemextin A activity. Its function is as follows. Hemextin AB complex: specifically inhibits the activation of FX (F10) by the TF-FVIIa complex (extrinsic tenase complex (ETC)) (IC(50)= 100 nM, Ki=50 nM) by non-competitively inhibiting the enzymatic activity of FVIIa. This is Hemextin B from Hemachatus haemachatus (Rinkhals).